Reading from the N-terminus, the 227-residue chain is Thiamine-phosphate synthase (227 aa).

4-amino-2-methyl-5-(diphosphooxymethyl)pyrimidine contacts are provided by residues 46-50 and Asn87; that span reads QLRDK. Mg(2+) is bound by residues Asp88 and Asp107. Position 126 (Ser126) interacts with 4-amino-2-methyl-5-(diphosphooxymethyl)pyrimidine. 152 to 154 provides a ligand contact to 2-[(2R,5Z)-2-carboxy-4-methylthiazol-5(2H)-ylidene]ethyl phosphate; it reads TPT. Lys155 is a 4-amino-2-methyl-5-(diphosphooxymethyl)pyrimidine binding site. Gly183 is a 2-[(2R,5Z)-2-carboxy-4-methylthiazol-5(2H)-ylidene]ethyl phosphate binding site.

This sequence belongs to the thiamine-phosphate synthase family. Mg(2+) serves as cofactor.

It carries out the reaction 2-[(2R,5Z)-2-carboxy-4-methylthiazol-5(2H)-ylidene]ethyl phosphate + 4-amino-2-methyl-5-(diphosphooxymethyl)pyrimidine + 2 H(+) = thiamine phosphate + CO2 + diphosphate. It catalyses the reaction 2-(2-carboxy-4-methylthiazol-5-yl)ethyl phosphate + 4-amino-2-methyl-5-(diphosphooxymethyl)pyrimidine + 2 H(+) = thiamine phosphate + CO2 + diphosphate. The catalysed reaction is 4-methyl-5-(2-phosphooxyethyl)-thiazole + 4-amino-2-methyl-5-(diphosphooxymethyl)pyrimidine + H(+) = thiamine phosphate + diphosphate. It functions in the pathway cofactor biosynthesis; thiamine diphosphate biosynthesis; thiamine phosphate from 4-amino-2-methyl-5-diphosphomethylpyrimidine and 4-methyl-5-(2-phosphoethyl)-thiazole: step 1/1. Condenses 4-methyl-5-(beta-hydroxyethyl)thiazole monophosphate (THZ-P) and 2-methyl-4-amino-5-hydroxymethyl pyrimidine pyrophosphate (HMP-PP) to form thiamine monophosphate (TMP). This chain is Thiamine-phosphate synthase, found in Mycolicibacterium smegmatis (strain ATCC 700084 / mc(2)155) (Mycobacterium smegmatis).